The chain runs to 242 residues: HTH-type transcriptional regulator GadW (242 aa).

The region spanning 139–236 (GKVERLISFD…GVTPHQFSQH (98 aa)) is the HTH araC/xylS-type domain. DNA-binding regions (H-T-H motif) lie at residues 156-177 (RDIA…QDEN) and 203-226 (LHTI…RQYY).

In terms of assembly, homodimer.

Functionally, depending on the conditions (growth phase and medium), acts as a positive or negative regulator of gadA and gadBC. Repression occurs directly or via the repression of the expression of gadX. Activation occurs directly by the binding of GadW to the gadA and gadBC promoters. This is HTH-type transcriptional regulator GadW (gadW) from Escherichia coli O6:H1 (strain CFT073 / ATCC 700928 / UPEC).